The chain runs to 984 residues: Mediator of RNA polymerase II transcription subunit 5 (984 aa).

The protein belongs to the Mediator complex subunit 5 family. Component of the Mediator complex.

Its subcellular location is the nucleus. Component of the Mediator complex, a coactivator involved in the regulated transcription of nearly all RNA polymerase II-dependent genes. Mediator functions as a bridge to convey information from gene-specific regulatory proteins to the basal RNA polymerase II transcription machinery. Mediator is recruited to promoters by direct interactions with regulatory proteins and serves as a scaffold for the assembly of a functional preinitiation complex with RNA polymerase II and the general transcription factors. The sequence is that of Mediator of RNA polymerase II transcription subunit 5 (NUT1) from Phaeosphaeria nodorum (strain SN15 / ATCC MYA-4574 / FGSC 10173) (Glume blotch fungus).